The chain runs to 506 residues: UDP-N-acetylmuramoyl-L-alanyl-D-glutamate--2,6-diaminopimelate ligase (506 aa).

S42 serves as a coordination point for UDP-N-acetyl-alpha-D-muramoyl-L-alanyl-D-glutamate. 125–131 (GTSGKTT) lines the ATP pocket. Residues 166-167 (TT), S193, and R201 each bind UDP-N-acetyl-alpha-D-muramoyl-L-alanyl-D-glutamate. K233 carries the N6-carboxylysine modification. Meso-2,6-diaminopimelate contacts are provided by residues R395, 419–422 (DNPR), G475, and E479. A Meso-diaminopimelate recognition motif motif is present at residues 419–422 (DNPR).

Belongs to the MurCDEF family. MurE subfamily. Mg(2+) is required as a cofactor. Post-translationally, carboxylation is probably crucial for Mg(2+) binding and, consequently, for the gamma-phosphate positioning of ATP.

Its subcellular location is the cytoplasm. The enzyme catalyses UDP-N-acetyl-alpha-D-muramoyl-L-alanyl-D-glutamate + meso-2,6-diaminopimelate + ATP = UDP-N-acetyl-alpha-D-muramoyl-L-alanyl-gamma-D-glutamyl-meso-2,6-diaminopimelate + ADP + phosphate + H(+). Its pathway is cell wall biogenesis; peptidoglycan biosynthesis. In terms of biological role, catalyzes the addition of meso-diaminopimelic acid to the nucleotide precursor UDP-N-acetylmuramoyl-L-alanyl-D-glutamate (UMAG) in the biosynthesis of bacterial cell-wall peptidoglycan. This is UDP-N-acetylmuramoyl-L-alanyl-D-glutamate--2,6-diaminopimelate ligase from Streptomyces avermitilis (strain ATCC 31267 / DSM 46492 / JCM 5070 / NBRC 14893 / NCIMB 12804 / NRRL 8165 / MA-4680).